The chain runs to 227 residues: Thymidine kinase 1 (227 aa).

Residues 15-22 (GPMFSGKT), 47-49 (DTR), and 91-94 (DEGQ) contribute to the ATP site. Catalysis depends on Glu-92, which acts as the Proton acceptor. Residue Phe-122 participates in substrate binding. Cys-147 and Cys-150 together coordinate Zn(2+). Substrate-binding positions include 166–170 (IELIG) and Tyr-175. Zn(2+) contacts are provided by Cys-179 and Cys-182. Positions 187-196 (QNEGNSTKPS) are enriched in polar residues. Residues 187–227 (QNEGNSTKPSKTARHSHSQSAPSVAPLAVNINPDDHLNNDY) are disordered.

It belongs to the thymidine kinase family. In terms of assembly, interacts with calmodulin in the presence of Ca(2+).

The enzyme catalyses thymidine + ATP = dTMP + ADP + H(+). This Dictyostelium discoideum (Social amoeba) protein is Thymidine kinase 1.